The primary structure comprises 1294 residues: Leucine-rich repeat receptor protein kinase MSP1 (1294 aa).

The signal sequence occupies residues 1–22; the sequence is MVSNSFWLFILLVSFIPISAWA. LRR repeat units lie at residues 88-112, 113-136, 138-160, 161-184, and 186-207; these read FQSL…LGNL, QNLQ…LYNL, MLKE…IAQL, QHLT…LGSL, and NLEL…TFGN. 3 N-linked (GlcNAc...) asparagine glycosylation sites follow: asparagine 198, asparagine 207, and asparagine 220. LRR repeat units follow at residues 232 to 256, 258 to 280, 282 to 304, 305 to 328, 330 to 352, 353 to 376, 378 to 400, 401 to 422, 423 to 446, 447 to 469, 471 to 493, 494 to 517, 519 to 541, 542 to 565, 566 to 589, 591 to 613, 614 to 637, 649 to 673, 675 to 697, 698 to 721, 722 to 745, 746 to 770, and 772 to 794; these read LTNL…IGQL, NLEL…IGSL, QLKL…ISGL, SSLT…MGEL, NLTQ…LGNC, KKLT…FADL, AIVS…IQKW, KNAR…VLPL, QHLL…ICQA, NSLH…AFKG, TNLT…YLAE, LPLV…LWES, TLLE…IGKL, SVLQ…VGDL, RNLT…LFNC, KLAT…ISHL, TLLD…ICVG, LQHH…IKNC, MVMV…LGEL, TNLT…SGPL, VQLQ…IGQI, LPKI…LLCN, and YLNH…CPDG. N-linked (GlcNAc...) asparagine glycosylation is found at asparagine 330 and asparagine 359. N-linked (GlcNAc...) asparagine glycosylation is found at asparagine 458 and asparagine 472. 3 N-linked (GlcNAc...) asparagine glycosylation sites follow: asparagine 567, asparagine 570, and asparagine 601. Asparagine 687, asparagine 699, and asparagine 704 each carry an N-linked (GlcNAc...) asparagine glycan. Asparagine 805, asparagine 821, and asparagine 832 each carry an N-linked (GlcNAc...) asparagine glycan. LRR repeat units lie at residues 822 to 846 and 848 to 870; these read FTQL…LSDL and SLNY…ICNI. A helical transmembrane segment spans residues 917–937; sequence ITICAFTFVIIIVLVLLAVYL. Residues 1002-1282 form the Protein kinase domain; the sequence is FSKVHIIGDG…KGLKMTHGME (281 aa). ATP-binding positions include 1008-1016 and lysine 1030; that span reads IGDGGFGTV. Aspartate 1129 (proton acceptor) is an active-site residue.

The protein belongs to the protein kinase superfamily. Ser/Thr protein kinase family. In terms of assembly, interacts with TDL1A. In terms of tissue distribution, expressed in anthers and ovules during meiosis.

Its subcellular location is the cell membrane. The catalysed reaction is L-seryl-[protein] + ATP = O-phospho-L-seryl-[protein] + ADP + H(+). It catalyses the reaction L-threonyl-[protein] + ATP = O-phospho-L-threonyl-[protein] + ADP + H(+). Functionally, receptor-like kinase that plays important roles in restricting the number of cells entering into male and female sporogenesis. Involved in cell specification during anther development and initiation of anther wall formation. The chain is Leucine-rich repeat receptor protein kinase MSP1 from Oryza sativa subsp. japonica (Rice).